The following is a 648-amino-acid chain: L-aspartate oxidase 2-b, chloroplastic (648 aa).

Residues Ser-98–Ala-101, Lys-120, Ser-127–Gly-134, and Asp-298 contribute to the FAD site. The active-site Proton donor/acceptor is Arg-373. FAD is bound by residues Glu-458 and Ser-474 to Leu-475.

This sequence belongs to the FAD-dependent oxidoreductase 2 family. NadB subfamily. The cofactor is FAD.

It localises to the plastid. The protein localises to the chloroplast. It catalyses the reaction L-aspartate + O2 = iminosuccinate + H2O2. The protein operates within alkaloid biosynthesis; nicotine biosynthesis. Its pathway is cofactor biosynthesis; NAD(+) biosynthesis; iminoaspartate from L-aspartate (oxidase route): step 1/1. Functionally, involved in the biosynthesis of pyridine alkaloid natural products, leading mainly to the production of anabasine, anatabine, nicotine and nornicotine, effective deterrents against herbivores with antiparasitic and pesticide properties (neurotoxins); nornicotine serves as the precursor in the synthesis of the carcinogen compound N'-nitrosonornicotine (NNN). Catalyzes the oxidation of L-aspartate to iminoaspartate. This is L-aspartate oxidase 2-b, chloroplastic from Nicotiana tabacum (Common tobacco).